Consider the following 258-residue polypeptide: Deoxyribose-phosphate aldolase (258 aa).

D102 functions as the Proton donor/acceptor in the catalytic mechanism. The active-site Schiff-base intermediate with acetaldehyde is K165. K199 acts as the Proton donor/acceptor in catalysis.

Belongs to the DeoC/FbaB aldolase family. DeoC type 2 subfamily.

It is found in the cytoplasm. The catalysed reaction is 2-deoxy-D-ribose 5-phosphate = D-glyceraldehyde 3-phosphate + acetaldehyde. It participates in carbohydrate degradation; 2-deoxy-D-ribose 1-phosphate degradation; D-glyceraldehyde 3-phosphate and acetaldehyde from 2-deoxy-alpha-D-ribose 1-phosphate: step 2/2. Its function is as follows. Catalyzes a reversible aldol reaction between acetaldehyde and D-glyceraldehyde 3-phosphate to generate 2-deoxy-D-ribose 5-phosphate. The protein is Deoxyribose-phosphate aldolase of Aliivibrio salmonicida (strain LFI1238) (Vibrio salmonicida (strain LFI1238)).